Here is a 302-residue protein sequence, read N- to C-terminus: Methionyl-tRNA formyltransferase (302 aa).

(6S)-5,6,7,8-tetrahydrofolate is bound at residue 108–111 (SLLP). Basic and acidic residues predominate over residues 276–288 (REGKRPMEPEEFL). A disordered region spans residues 276–302 (REGKRPMEPEEFLRGFPLPEGSRAHTA).

The protein belongs to the Fmt family.

The catalysed reaction is L-methionyl-tRNA(fMet) + (6R)-10-formyltetrahydrofolate = N-formyl-L-methionyl-tRNA(fMet) + (6S)-5,6,7,8-tetrahydrofolate + H(+). Its function is as follows. Attaches a formyl group to the free amino group of methionyl-tRNA(fMet). The formyl group appears to play a dual role in the initiator identity of N-formylmethionyl-tRNA by promoting its recognition by IF2 and preventing the misappropriation of this tRNA by the elongation apparatus. The polypeptide is Methionyl-tRNA formyltransferase (Cereibacter sphaeroides (strain KD131 / KCTC 12085) (Rhodobacter sphaeroides)).